Consider the following 422-residue polypeptide: 26S proteasome non-ATPase regulatory subunit 11 (422 aa).

A2 carries the N-acetylalanine modification. A phosphoserine mark is found at S14 and S23. Residues 224–392 (DWKTAYSYFY…GVLIIFDEPP (169 aa)) form the PCI domain. K274 is covalently cross-linked (Glycyl lysine isopeptide (Lys-Gly) (interchain with G-Cter in SUMO2)).

The protein belongs to the proteasome subunit S9 family. As to quaternary structure, component of the 19S proteasome regulatory particle complex. The 26S proteasome consists of a 20S core particle (CP) and two 19S regulatory subunits (RP). The regulatory particle is made of a lid composed of 9 subunits including PSMD11, a base containing 6 ATPases and few additional components.

Its function is as follows. Component of the 26S proteasome, a multiprotein complex involved in the ATP-dependent degradation of ubiquitinated proteins. This complex plays a key role in the maintenance of protein homeostasis by removing misfolded or damaged proteins, which could impair cellular functions, and by removing proteins whose functions are no longer required. Therefore, the proteasome participates in numerous cellular processes, including cell cycle progression, apoptosis, or DNA damage repair. In the complex, PSMD11 is required for proteasome assembly. Plays a key role in increased proteasome activity in embryonic stem cells (ESCs): its high expression in ESCs promotes enhanced assembly of the 26S proteasome, followed by higher proteasome activity. This is 26S proteasome non-ATPase regulatory subunit 11 (Psmd11) from Mus musculus (Mouse).